Here is a 242-residue protein sequence, read N- to C-terminus: Terpene cyclase cle7 (242 aa).

Transmembrane regions (helical) follow at residues 20–40 (LLLTLFSLSGTGWLINYITTI), 50–69 (GVSLVALTNNLAWELVFAIL), 79–101 (VILRSWLFVDIFVIYTTAKFARS), 117–137 (LFVLFGILGFFSGHWALSVLL), 143–163 (FYWSGMMCLVVMSGTALGILV), 172–192 (SYGMWFSRFVGSIFAVASLFL), and 207–227 (ILMRWFAGAFVVLDGLYGVCF).

It belongs to the paxB family.

The protein localises to the membrane. The protein operates within secondary metabolite biosynthesis; terpenoid biosynthesis. Non-reducing polyketide synthase; part of the cluster A that mediates the biosynthesis of chevalone E and its oxidized derivatives that possess a unique five-membered lactone ring and can synergistically enhance the cytotoxicity of doxorubicin (DOX) in breast cancer cells. Within the pathway, cle7 takes part to the biosynthesis of the molecular scaffold by catalyzing the cyclization of the prenyl group initiated by protonation and ring-opening of the epoxide to produce the chevalone E intermediate. The molecular scaffold is commonly biosynthesized by a series of enzymes including the non-reducing polyketide synthase (NR-PKS) cle1 that produces the alpha-pyrone triacetic acid lactone (TAL); The membrane-bound prenyltransferase cle5 that accepts TAL as its substrate to perform a C-3 geranylgeranylation reaction, in which the pathway-dedicated GGPS cle6 is required to provide GGPP, the other substrate of cle5; the FAD-dependent monooxygenase Cle3 that forms an (S)-epoxide ring at the terminal olefin of the geranylgeranyl group; and the terpene cyclase Cle7 that catalyzes the cyclization of the prenyl group that yields the pentacyclic pathway intermediate chevalone E. Chevalone E can derivatize into seven new oxidized analogs by the cytochrome P450 monooxygenases cle2 (acting at C-20) and cle4 (acting at C-11 and C-12). The sequence is that of Terpene cyclase cle7 from Aspergillus versicolor.